The following is a 206-amino-acid chain: Acidic proline-rich protein PRP33 (206 aa).

The signal sequence occupies residues 1–13 (MLVVLLTAALLVL). Residues 15–206 (SAHGSDEEVI…EQPSYLWFSS (192 aa)) form a disordered region. Acidic residues predominate over residues 55–71 (ENGDGDDSDDGDDDGSG). 6 tandem repeats follow at residues 80–97 (PPPH…HHHG), 98–115 (PPPS…NPQG), 116–133 (PPPQ…NPQG), 134–152 (PPPQ…KPQG), 153–170 (PPPQ…NPQG), and 171–189 (PPPQ…KPQD). The segment at 80–189 (PPPHGGNHQR…RPPQPRKPQD (110 aa)) is 6 X 18 AA approximate tandem repeats. Residues 103–112 (GPQTSSQPGN) show a composition bias toward low complexity. A compositionally biased stretch (pro residues) spans 113-174 (PQGPPPQGGP…PGNPQGPPPQ (62 aa)).

The protein resides in the secreted. In terms of biological role, may protect teeth by binding to tannins. The sequence is that of Acidic proline-rich protein PRP33 (Prpg1) from Rattus norvegicus (Rat).